The following is a 452-amino-acid chain: MDDIFTQCREGNAVAVRLWLDNTENDLNQGDDHGFSPLHWACREGRSAVVEMLIMRGARINVMNRGDDTPLHLAASHGHRDIVQKLLQYKADINAVNEHGNVPLHYACFWGQDQVAEDLVANGALVSICNKYGEMPVDKAKAPLRELLRERAEKMGQNLNRIPYKDTFWKGTTRTRPRNGTLNKHSGIDFKQLNFLAKLNENHSGELWKGRWQGNDIVVKVLKVRDWSTRKSRDFNEECPRLRIFSHPNVLPVLGACQAPPAPHPTLITHWMPYGSLYNVLHEGTNFVVDQSQAVKFALDMARGMAFLHTLEPLIPRHALNSRSVMIDEDMTARISMADVKFSFQCPGRMYAPAWVAPEALQKKPEDTNRRSADMWSFAVLLWELVTREVPFADLSNMEIGMKVALEGLRPTIPPGISPHVCKLMKICMNEDPAKRPKFDMIVPILEKMQDK.

Met1 carries the N-acetylmethionine modification. 5 ANK repeats span residues 2–30, 31–63, 64–96, 97–129, and 130–174; these read DDIF…LNQG, DDHG…INVM, NRGD…INAV, NEHG…VSIC, and NKYG…GTTR. The interaction with LIMS1 stretch occupies residues 33–139; that stretch reads HGFSPLHWAC…NKYGEMPVDK (107 aa). The residue at position 173 (Thr173) is a Phosphothreonine. Positions 180 to 212 are PH-like; mediates interaction with TGFB1I1; it reads GTLNKHSGIDFKQLNFLAKLNENHSGELWKGRW. Ser186 is subject to Phosphoserine. One can recognise a Protein kinase domain in the interval 193-446; it reads LNFLAKLNEN…PKFDMIVPIL (254 aa). Residues Asn200, Asn202, His203, and Ser204 each coordinate ATP. At Ser246 the chain carries Phosphoserine. Residues His270, Met272, and Asn279 each contribute to the ATP site. Residue Asp339 participates in Mg(2+) binding. Lys341 is an ATP binding site. Residues 363–371 carry the Nuclear localization signal motif; the sequence is KKPEDTNRR. The residue at position 426 (Lys426) is an N6-acetyllysine.

Belongs to the protein kinase superfamily. TKL Ser/Thr protein kinase family. In terms of assembly, component of the heterotrimeric IPP (ILK-PINCH-PARVIN) complex composed of ILK, LIMS1/PINCH and PARVA; the complex binds to F-actin via the C-terminal tail of LIMS1 and the N-terminal region of PARVA, promoting F-actin filament bundling. Formation of the IPP complex is dependent on protein kinase C and precedes integrin-mediated cell adhesion and spreading. ILK also interacts with LIMS2/PINCH2 and with PARVB and PARVG which may substitute for LIMS1 and PARVA in the IPP complex; PARVA and PARVB compete for the same binding site. Interaction with PARVG promotes the establishment of cell polarity required for leukocyte migration. Interacts with the cytoplasmic domain of integrin ITGB1 and may also interact with integrins ITGB2, ITGB3 and/or ITGB5. Interacts probably also with TGFB1I1. Interacts (via ANK repeats) with EPHA1 (via SAM domain); stimulated by EFNA1 but independent of the kinase activity of EPHA1. Interacts with FERMT2. Interacts with LIMD2; leading to activate the protein kinase activity. Interacts with PXN/PAXILLIN (via LD motif 4). Interacts with CCDC25 (via cytoplasmic region); initiating the ILK-PARVB cascade to induce cytoskeleton rearrangement and directional migration of cells. Interacts with IQGAP1; the interaction is required for localization of IQGAP1 to the cell cortex. Phosphorylation by PAK1 modulates ILK subcellular location by promoting its nuclear export. Highly expressed in lung, heart, kidney, liver, brain, spleen and skeletal muscle. Weakly expressed in testis.

It localises to the cell junction. Its subcellular location is the focal adhesion. The protein resides in the cell membrane. It is found in the cytoplasm. The protein localises to the myofibril. It localises to the sarcomere. Its subcellular location is the cell projection. The protein resides in the lamellipodium. It is found in the nucleus. The protein localises to the cytoskeleton. It localises to the microtubule organizing center. Its subcellular location is the centrosome. The protein resides in the cell cortex. In terms of biological role, scaffold protein which mediates protein-protein interactions during a range of cellular events including focal adhesion assembly, cell adhesion and cell migration. Regulates integrin-mediated signal transduction by contributing to inside-out integrin activation. Recruits PARVA and LIMS1/PITCH to form the heterotrimeric IPP (ILK-PINCH-PARVIN) complex which binds to F-actin via the C-terminal tail of LIMS1 and the N-terminal region of PARVA, promoting F-actin filament bundling, a process required to generate force for actin cytoskeleton reorganization and subsequent dynamic cell adhesion events such as cell spreading and migration. Binding to PARVA promotes effective assembly of ILK into focal adhesions while PARVA-bound ILK can simultaneously engage integrin-beta cytoplasmic tails to mediate cell adhesion. Plays a role with PARVG in promoting the cell adhesion and spreading of leukocytes. Acts as an upstream effector of both AKT1/PKB and GSK3. Mediates trafficking of caveolae to the cell surface in an ITGB1-dependent manner by promoting the recruitment of IQGAP1 to the cell cortex which cooperates with its effector DIAPH1 to locally stabilize microtubules and allow stable insertion of caveolae into the plasma membrane. Required for the maintenance of mitotic spindle integrity by promoting phosphorylation of TACC3 by AURKA. Associates with chromatin and may act as a negative regulator of transcription when located in the nucleus. This is Scaffold protein ILK from Mus musculus (Mouse).